The following is a 311-amino-acid chain: Acetaldehyde dehydrogenase 2 (311 aa).

Ser11 to Ile14 is an NAD(+) binding site. Catalysis depends on Cys131, which acts as the Acyl-thioester intermediate. Residues Ser162 to Asn170 and Asn289 each bind NAD(+).

Belongs to the acetaldehyde dehydrogenase family.

It catalyses the reaction acetaldehyde + NAD(+) + CoA = acetyl-CoA + NADH + H(+). The chain is Acetaldehyde dehydrogenase 2 (mhpF) from Azotobacter vinelandii (strain DJ / ATCC BAA-1303).